The following is a 689-amino-acid chain: Centrosomal protein of 78 kDa (689 aa).

Phosphoserine occurs at positions 325 and 327. Disordered stretches follow at residues 432–451, 563–589, and 614–689; these read SSEVEEVDDSSESVHEVPEK, PQMTSTVSNPPKEEKKALEDEKPEPKQ, and DSFP…TESH. Residues 450 to 505 adopt a coiled-coil conformation; it reads EKTSIEQEALQEKLEECLKQLKEERVIRLKVDKRVSELEHENAQLRNINFSLSEAL. 2 stretches are compositionally biased toward basic and acidic residues: residues 573–587 and 666–689; these read PKEEKKALEDEKPEP and QRKEEELSRNSRSSSEKKTKTESH.

It belongs to the CEP78 family. Interacts with PLK4. Interacts with FAM161A. Interacts with IFT20; regulating IFT20 stability and localization. Interacts with TTC21A; regulating TTC21A stability and localization. Interacts with USP16; promoting USP16-dependent deubiquitination of tektins. Interacts with DCAF1/VPRBP; promoting localization of the EDVP complex to centrosomes. Interacts with CEP350; promoting CEP78 localization to centrosome and centriole. As to expression, widely expressed. Expressed in different retinal cell types with higher expression in cone compared to rod cells (at protein level).

The protein resides in the cytoplasm. The protein localises to the cytoskeleton. It is found in the microtubule organizing center. It localises to the centrosome. Its subcellular location is the centriole. The protein resides in the cilium basal body. Centriole wall protein that localizes to mature centrioles and regulates centriole and cilia biogenesis. Involved in centrosome duplication: required for efficient PLK4 centrosomal localization and PLK4-induced overduplication of centrioles. Involved in cilium biogenesis and controls cilium length. Acts as a regulator of protein stability by preventing ubiquitination of centrosomal proteins, such as CCP110 and tektins. Associates with the EDVP complex, preventing ubiquitination and degradation of CCP110. Promotes deubiquitination of tektin proteins (TEKT1, TEKT2, TEK3, TEKT4 and TEKT5) via its interaction with USP16. In Homo sapiens (Human), this protein is Centrosomal protein of 78 kDa.